The sequence spans 219 residues: Trafficking protein particle complex subunit 4 (219 aa).

It belongs to the TRAPP small subunits family. TRAPPC4 subfamily. As to quaternary structure, component of the multisubunit TRAPP (transport protein particle) complex, which includes at least TRAPPC2, TRAPPC2L, TRAPPC3, TRAPPC3L, TRAPPC4, TRAPPC5, TRAPPC8, TRAPPC9, TRAPPC10, TRAPPC11 and TRAPPC12. Interacts with SDC2. In terms of tissue distribution, widely expressed.

It is found in the postsynaptic cell membrane. The protein localises to the golgi apparatus membrane. Its subcellular location is the endoplasmic reticulum. The protein resides in the vesicle. Its function is as follows. Core component of the TRAPP complexes which has a function of guanine nucleotide exchange factor activity for Rab1 GTPase. Plays a role in vesicular transport from endoplasmic reticulum to Golgi and autophagy. May play a role in dendrite postsynaptic membrane trafficking. This chain is Trafficking protein particle complex subunit 4, found in Mus musculus (Mouse).